The primary structure comprises 347 residues: Farnesyl pyrophosphate synthase (347 aa).

Residues lysine 50, arginine 53, and glutamine 88 each contribute to the isopentenyl diphosphate site. The Mg(2+) site is built by aspartate 95 and aspartate 99. Arginine 104 contacts dimethylallyl diphosphate. An isopentenyl diphosphate-binding site is contributed by arginine 105. 5 residues coordinate dimethylallyl diphosphate: lysine 192, threonine 193, glutamine 232, lysine 249, and lysine 258.

It belongs to the FPP/GGPP synthase family. Interacts with spo9. Requires Mg(2+) as cofactor.

Its subcellular location is the cytoplasm. It localises to the nucleus. The catalysed reaction is isopentenyl diphosphate + dimethylallyl diphosphate = (2E)-geranyl diphosphate + diphosphate. It catalyses the reaction isopentenyl diphosphate + (2E)-geranyl diphosphate = (2E,6E)-farnesyl diphosphate + diphosphate. The protein operates within isoprenoid biosynthesis; farnesyl diphosphate biosynthesis; farnesyl diphosphate from geranyl diphosphate and isopentenyl diphosphate: step 1/1. Its pathway is isoprenoid biosynthesis; geranyl diphosphate biosynthesis; geranyl diphosphate from dimethylallyl diphosphate and isopentenyl diphosphate: step 1/1. Farnesyl pyrophosphate synthase; part of the second module of ergosterol biosynthesis pathway that includes the middle steps of the pathway. Fps1 catalyzes the sequential condensation of isopentenyl pyrophosphate with dimethylallyl pyrophosphate, and then with the resultant geranylpyrophosphate to the ultimate product farnesyl pyrophosphate. The second module is carried out in the vacuole and involves the formation of farnesyl diphosphate, which is also an important intermediate in the biosynthesis of ubiquinone, dolichol, heme and prenylated proteins. Activity by the mevalonate kinase erg12 first converts mevalonate into 5-phosphomevalonate. 5-phosphomevalonate is then further converted to 5-diphosphomevalonate by the phosphomevalonate kinase erg8. The diphosphomevalonate decarboxylase mvd1 then produces isopentenyl diphosphate. The isopentenyl-diphosphate delta-isomerase idi1 then catalyzes the 1,3-allylic rearrangement of the homoallylic substrate isopentenyl (IPP) to its highly electrophilic allylic isomer, dimethylallyl diphosphate (DMAPP). Finally the farnesyl diphosphate synthase fps1 catalyzes the sequential condensation of isopentenyl pyrophosphate with dimethylallyl pyrophosphate, and then with the resultant geranylpyrophosphate to the ultimate product farnesyl pyrophosphate. This is Farnesyl pyrophosphate synthase from Schizosaccharomyces pombe (strain 972 / ATCC 24843) (Fission yeast).